The sequence spans 273 residues: Dermonecrotic toxin LarSicTox-alphaIB1aii (273 aa).

The active site involves histidine 5. Mg(2+)-binding residues include glutamate 25 and aspartate 27. Histidine 41 (nucleophile) is an active-site residue. Intrachain disulfides connect cysteine 45–cysteine 51 and cysteine 47–cysteine 190. Residue aspartate 85 coordinates Mg(2+). Asparagine 250 is a glycosylation site (N-linked (GlcNAc...) asparagine).

This sequence belongs to the arthropod phospholipase D family. Class II subfamily. Mg(2+) is required as a cofactor. Expressed by the venom gland.

The protein localises to the secreted. It carries out the reaction an N-(acyl)-sphingosylphosphocholine = an N-(acyl)-sphingosyl-1,3-cyclic phosphate + choline. The catalysed reaction is an N-(acyl)-sphingosylphosphoethanolamine = an N-(acyl)-sphingosyl-1,3-cyclic phosphate + ethanolamine. It catalyses the reaction a 1-acyl-sn-glycero-3-phosphocholine = a 1-acyl-sn-glycero-2,3-cyclic phosphate + choline. The enzyme catalyses a 1-acyl-sn-glycero-3-phosphoethanolamine = a 1-acyl-sn-glycero-2,3-cyclic phosphate + ethanolamine. In terms of biological role, dermonecrotic toxins cleave the phosphodiester linkage between the phosphate and headgroup of certain phospholipids (sphingolipid and lysolipid substrates), forming an alcohol (often choline) and a cyclic phosphate. This toxin acts on sphingomyelin (SM). It may also act on ceramide phosphoethanolamine (CPE), lysophosphatidylcholine (LPC) and lysophosphatidylethanolamine (LPE), but not on lysophosphatidylserine (LPS), and lysophosphatidylglycerol (LPG). It acts by transphosphatidylation, releasing exclusively cyclic phosphate products as second products. Induces dermonecrosis, hemolysis, increased vascular permeability, edema, inflammatory response, and platelet aggregation. This chain is Dermonecrotic toxin LarSicTox-alphaIB1aii, found in Loxosceles arizonica (Arizona brown spider).